A 106-amino-acid chain; its full sequence is V-type proton ATPase subunit G2 (106 aa).

The residue at position 1 (M1) is an N-acetylmethionine. The interval L31 to N67 is disordered. Basic and acidic residues predominate over residues Q33–E58.

Belongs to the V-ATPase G subunit family. As to quaternary structure, V-ATPase is a heteromultimeric enzyme composed of a peripheral catalytic V1 complex (components A to H) attached to an integral membrane V0 proton pore complex (components: a, c, c'', d and e).

The protein localises to the vacuole membrane. In terms of biological role, catalytic subunit of the peripheral V1 complex of vacuolar ATPase (V-ATPase). V-ATPase is responsible for acidifying a variety of intracellular compartments in eukaryotic cells. This Arabidopsis thaliana (Mouse-ear cress) protein is V-type proton ATPase subunit G2 (VHA-G2).